Reading from the N-terminus, the 362-residue chain is Probable branched-chain-amino-acid aminotransferase (362 aa).

At Lys-202 the chain carries N6-(pyridoxal phosphate)lysine.

Belongs to the class-IV pyridoxal-phosphate-dependent aminotransferase family. Requires pyridoxal 5'-phosphate as cofactor.

The enzyme catalyses L-leucine + 2-oxoglutarate = 4-methyl-2-oxopentanoate + L-glutamate. The catalysed reaction is L-isoleucine + 2-oxoglutarate = (S)-3-methyl-2-oxopentanoate + L-glutamate. It carries out the reaction L-valine + 2-oxoglutarate = 3-methyl-2-oxobutanoate + L-glutamate. The protein operates within amino-acid biosynthesis; L-isoleucine biosynthesis; L-isoleucine from 2-oxobutanoate: step 4/4. Its pathway is amino-acid biosynthesis; L-leucine biosynthesis; L-leucine from 3-methyl-2-oxobutanoate: step 4/4. It participates in amino-acid biosynthesis; L-valine biosynthesis; L-valine from pyruvate: step 4/4. Its function is as follows. Acts on leucine, isoleucine and valine. In Streptomyces coelicolor (strain ATCC BAA-471 / A3(2) / M145), this protein is Probable branched-chain-amino-acid aminotransferase (ilvE).